The chain runs to 556 residues: Phenylalanine--tRNA ligase beta subunit (556 aa).

Positions 278–354 constitute a B5 domain; it reads LTPKEFEVSF…IAYGYNNIDP (77 aa). The Mg(2+) site is built by D332, D338, E341, and D342.

It belongs to the phenylalanyl-tRNA synthetase beta subunit family. Type 2 subfamily. Tetramer of two alpha and two beta subunits. Mg(2+) serves as cofactor.

Its subcellular location is the cytoplasm. It carries out the reaction tRNA(Phe) + L-phenylalanine + ATP = L-phenylalanyl-tRNA(Phe) + AMP + diphosphate + H(+). The protein is Phenylalanine--tRNA ligase beta subunit of Pyrococcus furiosus (strain ATCC 43587 / DSM 3638 / JCM 8422 / Vc1).